Consider the following 381-residue polypeptide: Creatine kinase M-type (381 aa).

Residues 11-98 enclose the Phosphagen kinase N-terminal domain; it reads KLNYKPEEEY…FDPIISDRHG (88 aa). Positions 125–367 constitute a Phosphagen kinase C-terminal domain; the sequence is YVLSSRVRTG…KLMVEMEKKL (243 aa). 128–132 serves as a coordination point for ATP; sequence SSRVR. Ser-164 is modified (phosphoserine). Thr-166 carries the phosphothreonine modification. Ser-178 carries the phosphoserine modification. Thr-180 is modified (phosphothreonine). His-191 contributes to the ATP binding site. Position 199 is a phosphoserine (Ser-199). Arg-236 and Arg-292 together coordinate ATP. A phosphothreonine mark is found at Thr-313 and Thr-322. ATP contacts are provided by residues 320–325 and Asp-335; that span reads RGTGGV. Ser-372 is modified (phosphoserine).

This sequence belongs to the ATP:guanido phosphotransferase family. Dimer of identical or non-identical chains, which can be either B (brain type) or M (muscle type). With MM being the major form in skeletal muscle and myocardium, MB existing in myocardium, and BB existing in many tissues, especially brain.

The protein localises to the cytoplasm. It carries out the reaction creatine + ATP = N-phosphocreatine + ADP + H(+). In terms of biological role, reversibly catalyzes the transfer of phosphate between ATP and various phosphogens (e.g. creatine phosphate). Creatine kinase isoenzymes play a central role in energy transduction in tissues with large, fluctuating energy demands, such as skeletal muscle, heart, brain and spermatozoa. The polypeptide is Creatine kinase M-type (CKM) (Homo sapiens (Human)).